The sequence spans 806 residues: Lon protease 1 (806 aa).

A Lon N-terminal domain is found at 31-235; sequence VPLIAVPSHP…KVLELIYEEL (205 aa). 389–396 contacts ATP; sequence GPPGVGKT. The Lon proteolytic domain maps to 626–806; that stretch reads AMYSGMVMGL…NMREVIKLLF (181 aa). Active-site residues include Ser-714 and Lys-757.

The protein belongs to the peptidase S16 family. Homohexamer. Organized in a ring with a central cavity.

The protein localises to the cytoplasm. The catalysed reaction is Hydrolysis of proteins in presence of ATP.. Its function is as follows. ATP-dependent serine protease that mediates the selective degradation of mutant and abnormal proteins as well as certain short-lived regulatory proteins. Required for cellular homeostasis and for survival from DNA damage and developmental changes induced by stress. Degrades polypeptides processively to yield small peptide fragments that are 5 to 10 amino acids long. Binds to DNA in a double-stranded, site-specific manner. The sequence is that of Lon protease 1 from Borreliella burgdorferi (strain ATCC 35210 / DSM 4680 / CIP 102532 / B31) (Borrelia burgdorferi).